The following is a 372-amino-acid chain: Putative glutamate--cysteine ligase 2 (372 aa).

Belongs to the glutamate--cysteine ligase type 2 family. YbdK subfamily.

It catalyses the reaction L-cysteine + L-glutamate + ATP = gamma-L-glutamyl-L-cysteine + ADP + phosphate + H(+). Functionally, ATP-dependent carboxylate-amine ligase which exhibits weak glutamate--cysteine ligase activity. This Cupriavidus metallidurans (strain ATCC 43123 / DSM 2839 / NBRC 102507 / CH34) (Ralstonia metallidurans) protein is Putative glutamate--cysteine ligase 2.